A 152-amino-acid polypeptide reads, in one-letter code: Zinc finger SWIM domain-containing protein 7 (152 aa).

The SWIM-type zinc finger occupies 76–114; it reads YTCLASCHYCSCPAFSFSVLRKSDSLLCKHLLAIYLSQL.

The protein belongs to the SWS1 family. In terms of assembly, interacts with RAD51D and XRCC3; involved in homologous recombination repair. Interacts with SWSAP1; they form a functional complex involved in homologous recombination repair and stabilize each other.

The protein resides in the nucleus. Involved in early stages of the homologous recombination repair (HRR) pathway of double-stranded DNA breaks arising during DNA replication or induced by DNA-damaging agents. Required for meiotic progression, hence for fertility. This is Zinc finger SWIM domain-containing protein 7 (Zswim7) from Mus musculus (Mouse).